The sequence spans 171 residues: Protein hunchback (171 aa).

Disordered regions lie at residues 14 to 93 and 124 to 171; these read PMSH…PMQI and SNDK…KYMA. A compositionally biased stretch (basic residues) spans 17 to 31; that stretch reads HHHHHSHHSHGHHHS. 2 stretches are compositionally biased toward low complexity: residues 32 to 42 and 52 to 80; these read NSNSNASSPRQ and SSSNLHLEQYLKQQQQHQQQQQQPMDTPL. Residues 152-171 show a composition bias toward basic and acidic residues; sequence EPEKDHDLMSNSSEDMKYMA.

This sequence belongs to the hunchback C2H2-type zinc-finger protein family.

The protein localises to the nucleus. In terms of biological role, gap class segmentation protein that controls development of head structures. The sequence is that of Protein hunchback (hb) from Scaptomyza albovittata (Fruit fly).